We begin with the raw amino-acid sequence, 44 residues long: Somatoliberin (44 aa).

The residue at position 44 (Leu-44) is a Leucine amide.

Belongs to the glucagon family.

It localises to the secreted. In terms of biological role, GRF is released by the hypothalamus and acts on the adenohypophyse to stimulate the secretion of growth hormone. The protein is Somatoliberin (GHRH) of Ovis aries (Sheep).